Consider the following 306-residue polypeptide: Aspartate carbamoyltransferase catalytic subunit (306 aa).

Positions 55 and 56 each coordinate carbamoyl phosphate. K84 lines the L-aspartate pocket. The carbamoyl phosphate site is built by R105, H133, and Q136. L-aspartate-binding residues include R166 and R227. Residues L265 and P266 each coordinate carbamoyl phosphate.

This sequence belongs to the aspartate/ornithine carbamoyltransferase superfamily. ATCase family. As to quaternary structure, heterododecamer (2C3:3R2) of six catalytic PyrB chains organized as two trimers (C3), and six regulatory PyrI chains organized as three dimers (R2).

It catalyses the reaction carbamoyl phosphate + L-aspartate = N-carbamoyl-L-aspartate + phosphate + H(+). The protein operates within pyrimidine metabolism; UMP biosynthesis via de novo pathway; (S)-dihydroorotate from bicarbonate: step 2/3. In terms of biological role, catalyzes the condensation of carbamoyl phosphate and aspartate to form carbamoyl aspartate and inorganic phosphate, the committed step in the de novo pyrimidine nucleotide biosynthesis pathway. This chain is Aspartate carbamoyltransferase catalytic subunit, found in Neisseria meningitidis serogroup C (strain 053442).